The following is a 216-amino-acid chain: Ras-related protein Rab-11A (216 aa).

N-acetylglycine is present on glycine 2. Residues serine 20, glycine 21, valine 22, glycine 23, lysine 24, serine 25, asparagine 26, asparagine 37, leucine 38, serine 40, serine 42, and threonine 43 each contribute to the GTP site. Position 25 (serine 25) interacts with Mg(2+). A Switch 1 motif is present at residues 36–47 (FNLESKSTIGVE). Residues threonine 43 and aspartate 66 each coordinate Mg(2+). A Switch 2 motif is present at residues 67–86 (TAGQERYRAITSAYYRGAVG). Residues glycine 69, asparagine 124, lysine 125, aspartate 127, alanine 155, and leucine 156 each contribute to the GTP site. The disordered stretch occupies residues 183 to 207 (DRRENDMSPSNNVVPIHVPPTTENK). S-geranylgeranyl cysteine attachment occurs at residues cysteine 212 and cysteine 213. Position 213 is a cysteine methyl ester (cysteine 213). Residues 214–216 (QNI) constitute a propeptide, removed in mature form.

The protein belongs to the small GTPase superfamily. Rab family. In terms of assembly, interacts (GTP-bound form) with RAB11FIPs (via their C-termini) including RAB11FIP1, RAB11FIP2, RAB11FIP3, RAB11FIP4 and RAB11FIP5 effectors. Forms a complex with RAB11FIP3 and dynein intermediate chain DYNC1LI1; the interaction between RAB11A1 and RAB11FIP3 is direct; the complex regulates endocytic trafficking. Interacts with EVI5; EVI5 and RAB11FIP3 may be mutually exclusive and compete for binding RAB11A. Interacts with SGSM1, SGSM2, SGSM3 and VIPAS39. Interacts with EXOC6 in a GTP-dependent manner. Interacts with RAB11FIP5. Interacts with STXBP6. Interacts (GDP-bound form) with ZFYVE27. Interacts with BIRC6/bruce. May interact with TBC1D14. Interacts with UNC119; in a cell cycle-dependent manner. GDP-bound and nucleotide-free forms interact with SH3BP5. Interacts (GDP-bound form) with KIF5A in a ZFYVE27-dependent manner. Interacts (GDP-bound form) with RELCH. Found in a complex composed of RELCH, OSBP1 and RAB11A. Interacts with TBC1D12. Interacts with DEF6. Interacts with ATP9A. Forms a heterotetramer with RAB11FIP3; the GTP-bound form is preferred for binding. Forms a complex with Rabin8/RAB3IP and RAB11FIP3, probably a heterohexamer with two of each protein subunit, where Rabin8/RAB3IP and RAB11FIP3 simultaneously bind to RAB11A; the complex promotes preciliary trafficking and cilia growth. Forms a complex containing RAB11A, ASAP1, Rabin8/RAB3IP, RAP11FIP3 and ARF4; the complex promotes preciliary trafficking; the complex binds to RHO in photoreceptor cells and promotes RHO ciliary transport. Interacts (GTP-bound form) with WDR44; the interaction prevents RAB11A-RAB3IP-RAB11FIP3 complex formation. It depends on Mg(2+) as a cofactor.

It localises to the cell membrane. The protein resides in the endosome membrane. Its subcellular location is the recycling endosome membrane. It is found in the cleavage furrow. The protein localises to the cytoplasmic vesicle. It localises to the phagosome. The protein resides in the cytoplasmic vesicle membrane. Its subcellular location is the golgi apparatus. It is found in the trans-Golgi network. The catalysed reaction is GTP + H2O = GDP + phosphate + H(+). With respect to regulation, regulated by guanine nucleotide exchange factors (GEFs) which promote the exchange of bound GDP for free GTP. Regulated by GTPase activating proteins (GAPs) which increase the GTP hydrolysis activity. Inhibited by GDP dissociation inhibitors (GDIs) which prevent Rab-GDP dissociation. Its function is as follows. The small GTPases Rab are key regulators of intracellular membrane trafficking, from the formation of transport vesicles to their fusion with membranes. Rabs cycle between an inactive GDP-bound form and an active GTP-bound form that is able to recruit to membranes different set of downstream effectors directly responsible for vesicle formation, movement, tethering and fusion. The small Rab GTPase RAB11A regulates endocytic recycling. Forms a functional Rab11/RAB11FIP3/dynein complex that regulates the movement of peripheral sorting endosomes (SE) along microtubule tracks toward the microtubule organizing center/centrosome, generating the endosomal recycling compartment (ERC). Acts as a major regulator of membrane delivery during cytokinesis. Together with MYO5B and RAB8A participates in epithelial cell polarization. Together with Rabin8/RAB3IP, RAB8A, the exocyst complex, PARD3, PRKCI, ANXA2, CDC42 and DNMBP promotes transcytosis of PODXL to the apical membrane initiation sites (AMIS), apical surface formation and lumenogenesis. Together with MYO5B participates in CFTR trafficking to the plasma membrane and TF (Transferrin) recycling in nonpolarized cells. Required in a complex with MYO5B and RAB11FIP2 for the transport of NPC1L1 to the plasma membrane. Participates in the sorting and basolateral transport of CDH1 from the Golgi apparatus to the plasma membrane. Regulates the recycling of FCGRT (receptor of Fc region of monomeric IgG) to basolateral membranes. May also play a role in melanosome transport and release from melanocytes. Promotes Rabin8/RAB3IP preciliary vesicular trafficking to mother centriole by forming a ciliary targeting complex containing Rab11, ASAP1, Rabin8/RAB3IP, RAB11FIP3 and ARF4, thereby regulating ciliogenesis initiation. On the contrary, upon LPAR1 receptor signaling pathway activation, interaction with phosphorylated WDR44 prevents Rab11-RAB3IP-RAB11FIP3 complex formation and cilia growth. Participates in the export of a subset of neosynthesized proteins through a Rab8-Rab10-Rab11-endososomal dependent export route via interaction with WDR44. This chain is Ras-related protein Rab-11A, found in Bos taurus (Bovine).